A 167-amino-acid chain; its full sequence is MALKSLVLLSLLVLVLLLVQVQPSLGKESAAAKFRRQHMDSGSSSSSNPNYCNQMMKRRRMTHGRCKPVNTFVHESLDDVKAVCSQKNITCKNGHPNCYQSKSTMSITDCRETGSSKYPNCAYKTSQKQKYITVACEGNPYVPVHFDGAVLLPATPVPSLPPPHRLL.

An N-terminal signal peptide occupies residues 1–26; that stretch reads MALKSLVLLSLLVLVLLLVQVQPSLG. The substrate site is built by Lys33 and Arg36. Catalysis depends on His38, which acts as the Proton acceptor. Intrachain disulfides connect Cys52–Cys110, Cys66–Cys121, Cys84–Cys136, and Cys91–Cys98. 67 to 71 provides a ligand contact to substrate; it reads KPVNT. Asn88 is a glycosylation site (N-linked (GlcNAc...) asparagine). 2 residues coordinate substrate: Lys92 and Arg111. Catalysis depends on His145, which acts as the Proton donor. O-linked (GalNAc...) threonine glycosylation is present at Thr155. Ser159 carries an O-linked (GalNAc...) serine glycan.

This sequence belongs to the pancreatic ribonuclease family.

It localises to the secreted. In Bos taurus (Bovine), this protein is Brain ribonuclease (BRN).